The primary structure comprises 215 residues: Guanylate kinase (215 aa).

The Guanylate kinase-like domain occupies Gly-11–Ser-189. Ala-18–Ser-25 contributes to the ATP binding site.

This sequence belongs to the guanylate kinase family.

It is found in the cytoplasm. It carries out the reaction GMP + ATP = GDP + ADP. Its function is as follows. Essential for recycling GMP and indirectly, cGMP. This Bordetella bronchiseptica (strain ATCC BAA-588 / NCTC 13252 / RB50) (Alcaligenes bronchisepticus) protein is Guanylate kinase.